Reading from the N-terminus, the 142-residue chain is Large ribosomal subunit protein uL11 (142 aa).

This sequence belongs to the universal ribosomal protein uL11 family. As to quaternary structure, part of the ribosomal stalk of the 50S ribosomal subunit. Interacts with L10 and the large rRNA to form the base of the stalk. L10 forms an elongated spine to which L12 dimers bind in a sequential fashion forming a multimeric L10(L12)X complex. Post-translationally, one or more lysine residues are methylated.

Functionally, forms part of the ribosomal stalk which helps the ribosome interact with GTP-bound translation factors. This chain is Large ribosomal subunit protein uL11, found in Buchnera aphidicola subsp. Acyrthosiphon pisum (strain APS) (Acyrthosiphon pisum symbiotic bacterium).